The sequence spans 1047 residues: MVENSTQKAPHAGNDDNSSTKPYSEAFFLGFNNPTPGLEAEHSSTSPAPENSETHNRKRNRILFVCQACRKSKTKCDREKPECGRCVKHGLKCVYDVSKQPAPRIPSKDAIISRLEKDMFYWKDKAMKLLTEREVNESGKRSASPINTNNASGDSPDTKKQHKMEPIYEQSGNGDINNGTRNDIEINLYRSHPTMIMSKVMKREVKPLSENYIIIQDCFLKILVTSVFLDTSKNTMIPALTANANITRAQPSVANNLLKLKEMLIRQCQTEDEKNRVNEFTDRILQNTNSNRNLKIGMLLSMLYNSVGYQYLEDHCPQGGEYSDLLRNLINECEAILPSYEIIERYKNHFYEYVYPSLPFIELEIFEESLSQTIFPDPNNPSKVQIRMGSTHLRAKVENLSLLLVILKLSYMSIRFLDHSTADSSFYLSKEIIDKYPIPNDFILLSQRCLASENWCACANENIISCLLYIWSFFAFSPEEGDFFLEHPTDVISSLIMMLSTSIGLHRDPSDFPQLISPSTSDKRTLNHRRILWLSIVTVCSFEASLKGRHSVSPISLMALFLNIKDPDSLTVYMNRVRGDLSDINNHKLLRIHKFTFKRAQLALLLSDLDNLTMTYYGSFHLHSIEFIREKIEIFVEENFPIVPLKSVAQDKSDLDDMNVISEMNILSSENSSSFHNRIMNKLLMLRTSMAVFLHFETLITKDKSIFPFYKKYFMVSCMDALSLINYFNKFFNGEYRHAISSLTSFNVTKFIQLALSSTIFSLLGIILRIGLAIHMLSSEVQKLSGTTDPRIKELNTKVEKFSTLQRDLESALEGIYCSASEHLRFTYFPVFKMLALFDVIVQRMRKGELWHGIFTMIQMEQMHSRIIKTLSITLGVKLDKKDRLLEELMACNHVANFSVEDIDELNRNIKKEIQISSGLKPPVNTIDLTNGEPFGNAVPTFTKTWSSSLDNLEKLSSAAAVGQSLDYNSGLRQGPLAGGGSKEQTPIAGMNNLNNSINATPIVDNSSGSQLPNGFDRGQANNTPFPGYFGGLDLFDYDFLFGNDFA.

A disordered region spans residues Met1–Asn56. Positions Cys66–Cys93 form a DNA-binding region, zn(2)-C6 fungal-type. Residues Arg133 to Lys163 are disordered. A compositionally biased stretch (polar residues) spans Ser144 to Ser155. Residue Ser155 is modified to Phosphoserine. Positions Asp1034–Phe1042 match the 9aaTAD motif.

As to quaternary structure, heterodimer of PIP2 and OAF1.

Its subcellular location is the nucleus. In terms of biological role, the PIP2-OAF1 heterodimer acts as a transcriptional activator to induce the transcription of genes encoding proteins involved in fatty acid beta-oxidation, a response called oleic acid induction, when cells grow on fatty acids as sole carbon source. Recognizes and binds to the oleate response element (ORE) (or peroxisome box), two inverted CGG triplets spaced by 14 to 18 intervening nucleotides, in the promoter region of a number of genes (such as CTA1, FOX1 to FOX3, FAA2, PAS8, PAS10, etc.) for peroxisomal proteins. OAF1 acts as the sensor for oleate and inhibits PIP2 activity under non-inducing conditions. Activity is repressed by glucose. This Saccharomyces cerevisiae (strain ATCC 204508 / S288c) (Baker's yeast) protein is Oleate-activated transcription factor 1 (OAF1).